The primary structure comprises 176 residues: NAD(P)H-quinone oxidoreductase subunit J (176 aa).

It belongs to the complex I 30 kDa subunit family. As to quaternary structure, NDH-1 can be composed of about 15 different subunits; different subcomplexes with different compositions have been identified which probably have different functions.

The protein resides in the cell inner membrane. It catalyses the reaction a plastoquinone + NADH + (n+1) H(+)(in) = a plastoquinol + NAD(+) + n H(+)(out). It carries out the reaction a plastoquinone + NADPH + (n+1) H(+)(in) = a plastoquinol + NADP(+) + n H(+)(out). Functionally, NDH-1 shuttles electrons from an unknown electron donor, via FMN and iron-sulfur (Fe-S) centers, to quinones in the respiratory and/or the photosynthetic chain. The immediate electron acceptor for the enzyme in this species is believed to be plastoquinone. Couples the redox reaction to proton translocation, and thus conserves the redox energy in a proton gradient. Cyanobacterial NDH-1 also plays a role in inorganic carbon-concentration. This is NAD(P)H-quinone oxidoreductase subunit J from Gloeobacter violaceus (strain ATCC 29082 / PCC 7421).